The chain runs to 532 residues: 2,3-bisphosphoglycerate-independent phosphoglycerate mutase (532 aa).

The Mn(2+) site is built by D15 and S65. S65 (phosphoserine intermediate) is an active-site residue. Substrate contacts are provided by residues H126, 156–157, R188, R194, 258–261, and K331; these read RD and RPDR. The Mn(2+) site is built by D398, H402, D439, H440, and H457.

The protein belongs to the BPG-independent phosphoglycerate mutase family. Monomer. Mn(2+) serves as cofactor.

The enzyme catalyses (2R)-2-phosphoglycerate = (2R)-3-phosphoglycerate. Its pathway is carbohydrate degradation; glycolysis; pyruvate from D-glyceraldehyde 3-phosphate: step 3/5. In terms of biological role, catalyzes the interconversion of 2-phosphoglycerate and 3-phosphoglycerate. This is 2,3-bisphosphoglycerate-independent phosphoglycerate mutase from Gloeothece citriformis (strain PCC 7424) (Cyanothece sp. (strain PCC 7424)).